Reading from the N-terminus, the 920-residue chain is Plasma membrane ATPase (920 aa).

The span at 1 to 11 shows a compositional bias: basic and acidic residues; the sequence is MSDERITEKPP. Positions 1–71 are disordered; it reads MSDERITEKP…AEEDDGPAAA (71 aa). The Cytoplasmic segment spans residues 1–117; the sequence is MSDERITEKP…REESENLLVK (117 aa). A compositionally biased stretch (acidic residues) spans 17-50; sequence SEGEPVPEEEVEEETEEEVPDEQSSEDDDIDGLI. Residues 118–138 form a helical membrane-spanning segment; the sequence is FLMFFIGPIQFVMEAAAVLAA. The Extracellular portion of the chain corresponds to 139 to 142; the sequence is GLED. Residues 143–162 traverse the membrane as a helical segment; it reads WVDFGVICGLLFLNAGVGFI. Residues 163 to 293 lie on the Cytoplasmic side of the membrane; it reads QEFQAGSIVE…GQGHFTEVLN (131 aa). A helical transmembrane segment spans residues 294-315; it reads GIGVILLVLVVITLLLIWTACF. Topologically, residues 316-326 are extracellular; it reads YRTVRIVPILR. Residues 327–349 traverse the membrane as a helical segment; that stretch reads YTLGITIVGVPVGLPAVVTTTMA. Residues 350 to 721 are Cytoplasmic-facing; it reads GGAAYLAKKQ…IAILNHSLDI (372 aa). Asp-380 acts as the 4-aspartylphosphate intermediate in catalysis. The Mg(2+) site is built by Asp-636 and Asp-640. The helical transmembrane segment at 722-740 threads the bilayer; it reads DLIVFIAIFADVATLAIAY. Residues 741 to 756 are Extracellular-facing; it reads DNAPFSPSPVKWNLPR. Residues 757–776 form a helical membrane-spanning segment; that stretch reads LWGMSIMMGIILAAGTWITL. The Cytoplasmic portion of the chain corresponds to 777–826; sequence TTMFLPKGGIIQNFGSIDGILFLEISLTENWLIFITRAVGPFWSSIPSWQ. Residues 827 to 847 traverse the membrane as a helical segment; sequence LAGAVFVVDVVATMFTLFGWW. The Extracellular portion of the chain corresponds to 848-859; sequence SQNWTDIVTVVR. A helical transmembrane segment spans residues 860-876; it reads IYIWSIGIFCCLGGAYY. Topologically, residues 877–920 are cytoplasmic; that stretch reads LMSESETFDRLMNGKPLKENKSTRSVEDFLASMRRVSTQHEKGN.

It belongs to the cation transport ATPase (P-type) (TC 3.A.3) family. Type IIIA subfamily.

Its subcellular location is the cell membrane. The catalysed reaction is ATP + H2O + H(+)(in) = ADP + phosphate + 2 H(+)(out). Functionally, the plasma membrane ATPase of plants and fungi is a hydrogen ion pump. The proton gradient it generates drives the active transport of nutrients by H(+)-symport. The resulting external acidification and/or internal alkinization may mediate growth responses. The chain is Plasma membrane ATPase from Zygosaccharomyces rouxii.